A 1988-amino-acid chain; its full sequence is Sodium channel protein type 9 subunit alpha (1988 aa).

At 1–125 (MAMLPPPGPQ…RRISIKILVH (125 aa)) the chain is on the cytoplasmic side. Positions 26 to 39 (RIAERKSKEPKEEK) are enriched in basic and acidic residues. The interval 26–55 (RIAERKSKEPKEEKKDDDEEAPKPSSDLEA) is disordered. The I repeat unit spans residues 112–410 (FSPLRRISIK…VAMAYEEQNQ (299 aa)). The helical transmembrane segment at 126–145 (SLFSMLIMCTILTNCIFMTM) threads the bilayer. The Extracellular segment spans residues 146-150 (NNPPD). The helical transmembrane segment at 151 to 172 (WTKNVEYTFTGIYTFESLVKIL) threads the bilayer. The Cytoplasmic portion of the chain corresponds to 173-185 (ARGFCVGEFTFLR). The chain crosses the membrane as a helical span at residues 186–204 (DPWNWLDFVVIVFAYLTEF). The Extracellular portion of the chain corresponds to 205-210 (VNLGNV). N209 is a glycosylation site (N-linked (GlcNAc...) asparagine). Residues 211–227 (SALRTFRVLRALKTISV) traverse the membrane as a helical segment. Over 228-241 (IPGLKTIVGALIQS) the chain is Cytoplasmic. Residues 242 to 267 (VKKLSDVMILTVFCLSVFALIGLQLF) traverse the membrane as a helical segment. Residues 268 to 346 (MGNLKHKCFR…PDYGYTSFDT (79 aa)) lie on the Extracellular side of the membrane. Cysteines 275 and 324 form a disulfide. N283 carries N-linked (GlcNAc...) asparagine glycosylation. The pore-forming intramembrane region spans 347–363 (FSWAFLALFRLMTQDYW). The Extracellular segment spans residues 364-376 (ENLYQQTLRAAGK). Residues 377-402 (TYMIFFVVVIFLGSFYLINLILAVVA) form a helical membrane-spanning segment. Over 403–745 (MAYEEQNQAN…CIYFIVMDPF (343 aa)) the chain is Cytoplasmic. Over residues 461–471 (SSSETSKLSSK) the composition is skewed to low complexity. Disordered stretches follow at residues 461–543 (SSSE…RGSL) and 565–611 (GSET…SPPM). Residues 474–486 (KERRNRRKKKNQK) are compositionally biased toward basic residues. Basic and acidic residues-rich tracts occupy residues 489 to 510 (SSGE…DSIR) and 573 to 585 (DEHS…ESRR). An II repeat occupies 726–989 (CSPYWIKFKK…EEDPDANNLQ (264 aa)). The chain crosses the membrane as a helical span at residues 746–762 (VDLAITICIVLNTLFMA). Topologically, residues 763–771 (MEHHPMTEE) are extracellular. The chain crosses the membrane as a helical span at residues 772–796 (FKNVLAIGNLVFTGIFAAEMVLKLI). The Cytoplasmic segment spans residues 797–805 (AMDPYEYFQ). The chain crosses the membrane as a helical span at residues 806 to 822 (VGWNIFDSLIVTLSLVE). The Extracellular portion of the chain corresponds to 823-831 (LFLADVEGL). A helical transmembrane segment spans residues 832–848 (SVLRSFRLLRVFKLAKS). Over 849–865 (WPTLNMLIKIIGNSVGA) the chain is Cytoplasmic. A helical transmembrane segment spans residues 866-888 (LGNLTLVLAIIVFIFAVVGMQLF). Over 889–915 (GKSYKECVCKINDDCTLPRWHMNDFFH) the chain is Extracellular. C897 and C903 are disulfide-bonded. The segment at residues 916-928 (SFLIVFRVLCGEW) is an intramembrane region (pore-forming). Residues 929 to 940 (IETMWDCMEVAG) lie on the Extracellular side of the membrane. C935 and C944 are disulfide-bonded. A helical membrane pass occupies residues 941–967 (QAMCLIVYMMVMVIGNLVVLNLFLALL). At 968-1187 (LSSFSSDNLT…WWNIRKTCYK (220 aa)) the chain is on the cytoplasmic side. Residues 1102–1148 (NAEELSSDSDSEYSKVRLNRSSSSECSTVDNPLPGEGEEAEAEPMNS) are disordered. Residues 1120–1131 (NRSSSSECSTVD) are compositionally biased toward polar residues. The segment covering 1137-1148 (EGEEAEAEPMNS) has biased composition (acidic residues). One copy of the III repeat lies at 1180–1488 (NIRKTCYKIV…KKYYNAMKKL (309 aa)). A helical membrane pass occupies residues 1188–1212 (IVEHSWFESFIVLMILLSSGALAFE). The Extracellular segment spans residues 1213–1224 (DIYIERKKTIKI). The chain crosses the membrane as a helical span at residues 1225 to 1250 (ILEYADKIFTYIFILEMLLKWIAYGY). The Cytoplasmic segment spans residues 1251-1252 (KT). Residues 1253 to 1278 (YFTNAWCWLDFLIVDVSLVTLVANTL) traverse the membrane as a helical segment. Over 1279–1287 (GYSDLGPIK) the chain is Extracellular. Residues 1288–1304 (SLRTLRALRPLRALSRF) traverse the membrane as a helical segment. Residues 1305-1317 (EGMRVVVNALIGA) are Cytoplasmic-facing. The helical transmembrane segment at 1318–1342 (IPSIMNVLLVCLIFWLIFSIMGVNL) threads the bilayer. The Extracellular portion of the chain corresponds to 1343–1394 (FAGKFYECINTTDGSRFPASQVPNRSECFALMNVSQNVRWKNLKVNFDNVGL). The cysteines at positions 1350 and 1370 are disulfide-linked. 3 N-linked (GlcNAc...) asparagine glycosylation sites follow: N1352, N1366, and N1375. Positions 1395–1405 (GYLSLLQVATF) form an intramembrane region, pore-forming. Over 1406 to 1431 (KGWTIIMYAAVDSVNVDKQPKYEYSL) the chain is Extracellular. The chain crosses the membrane as a helical span at residues 1432–1457 (YMYIYFVVFIIFGSFFTLNLFIGVII). Residues 1458–1514 (DNFNQQKKKLGGQDIFMTEEQKKYYNAMKKLGSKKPQKPIPRPGNKIQGCIFDLVTN) are Cytoplasmic-facing. A Phosphoserine; by PKC modification is found at S1490. An IV repeat occupies 1497 to 1795 (IPRPGNKIQG…WEKFDPDATQ (299 aa)). Residues 1515–1534 (QAFDISIMVLICLNMVTMMV) form a helical membrane-spanning segment. Residues 1535–1545 (EKEGQSQHMTE) lie on the Extracellular side of the membrane. The helical transmembrane segment at 1546–1567 (VLYWINVVFIILFTGECVLKLI) threads the bilayer. Residues 1568–1576 (SLRHYYFTV) lie on the Cytoplasmic side of the membrane. Residues 1577-1598 (GWNIFDFVVVIISIVGMFLADL) traverse the membrane as a helical segment. Over 1599-1607 (IETYFVSPT) the chain is Extracellular. A helical transmembrane segment spans residues 1608–1627 (LFRVIRLARIGRILRLVKGA). Over 1628–1640 (KGIRTLLFALMMS) the chain is Cytoplasmic. A helical membrane pass occupies residues 1641 to 1663 (LPALFNIGLLLFLVMFIYAIFGM). The Extracellular portion of the chain corresponds to 1664–1686 (SNFAYVKKEDGINDMFNFETFGN). Positions 1687–1699 (SMICLFQITTSAG) form an intramembrane region, pore-forming. Residues 1700–1733 (WDGLLAPILNSKPPDCDPKKVHPGSSVEGDCGNP) are Extracellular-facing. A disulfide bridge links C1715 with C1730. Residues 1734 to 1759 (SVGIFYFVSYIIISFLVVVNMYIAVI) traverse the membrane as a helical segment. At 1760–1988 (LENFSVATEE…KGKDSKESKK (229 aa)) the chain is on the cytoplasmic side. Positions 1889-1918 (EDVSATVIQRAYRRYRLRQNVKNISSIYIK) constitute an IQ domain. The disordered stretch occupies residues 1934 to 1988 (FDNVNENSSPEKTDATSSTTSPPSYDSVTKPDKEKYEQDRTEKEDKGKDSKESKK). Residues 1948-1961 (ATSSTTSPPSYDSV) are compositionally biased toward low complexity. Residues 1962–1988 (TKPDKEKYEQDRTEKEDKGKDSKESKK) are compositionally biased toward basic and acidic residues.

The protein belongs to the sodium channel (TC 1.A.1.10) family. Nav1.7/SCN9A subfamily. The Nav1.7 voltage-gated sodium channel consists of an ion-conducting alpha subunit SCN9A which is functional on its own regulated by one or more beta-1 (SCN1B), beta-2 (SCN2B), beta-3 (SCN3B) and beta-4 (SCN4B) subunits. SCN1B and SCN3B are non-covalently associated with SCN9A. SCN2B and SCN4B are disulfide-linked to SCN9A. SCN1B regulates channel inactivation. Interacts with NEDD4 and NEDD4L; regulates Nav1.7 activity most probably through ubiquitination and subsequent endocytosis. Interacts with TMEM233; modulates the gating properties of NaV1.7. In terms of processing, phosphorylation at Ser-1490 by PKC in a highly conserved cytoplasmic loop increases peak sodium currents. Ubiquitinated by NEDD4L; which may promote its endocytosis. Expressed strongly in dorsal root ganglion, with only minor levels elsewhere in the body, smooth muscle cells, MTC cell line and C-cell carcinoma. Also expressed in vagus nerves within the head and neck region. Isoform 1 is expressed preferentially in the central and peripheral nervous system. Isoform 2 is expressed preferentially in the dorsal root ganglion.

The protein resides in the cell membrane. It is found in the cell projection. The protein localises to the neuron projection. It localises to the axon. The enzyme catalyses Na(+)(in) = Na(+)(out). Its activity is regulated as follows. Inhibited by tetrodotoxin. Weakly inhibited by saxitoxin. Inhibited by the spider huwentoxin-IV that binds the extracellular loop S3-S4 of repeat II. Inhibited by the spider protoxin-II that binds the extracellular loop S3-S4 of repeats II and IV. Inhibited by the scorpion alpha-toxins CvIV4 and AaH2. Inhibited by the conotoxin GVIIJ. Inhibited by the spider beta/delta-theraphotoxin-Pre1a. Functionally, pore-forming subunit of Nav1.7, a voltage-gated sodium (Nav) channel that directly mediates the depolarizing phase of action potentials in excitable membranes. Navs, also called VGSCs (voltage-gated sodium channels) or VDSCs (voltage-dependent sodium channels), operate by switching between closed and open conformations depending on the voltage difference across the membrane. In the open conformation they allow Na(+) ions to selectively pass through the pore, along their electrochemical gradient. The influx of Na(+) ions provokes membrane depolarization, initiating the propagation of electrical signals throughout cells and tissues. Nav1.7 plays a crucial role in controlling the excitability and action potential propagation from nociceptor neurons, thereby contributing to the sensory perception of pain. The chain is Sodium channel protein type 9 subunit alpha from Homo sapiens (Human).